Consider the following 45-residue polypeptide: Keratin-associated protein 22-2 (45 aa).

This sequence belongs to the KRTAP type 20 family. In terms of assembly, interacts with hair keratins.

Functionally, in the hair cortex, hair keratin intermediate filaments are embedded in an interfilamentous matrix, consisting of hair keratin-associated proteins (KRTAP), which are essential for the formation of a rigid and resistant hair shaft through their extensive disulfide bond cross-linking with abundant cysteine residues of hair keratins. The matrix proteins include the high-sulfur and high-glycine-tyrosine keratins. This is Keratin-associated protein 22-2 (KRTAP22-2) from Homo sapiens (Human).